The sequence spans 254 residues: N-acetylglucosamine-induced protein 1 (254 aa).

Its subcellular location is the cytoplasm. Its function is as follows. N-acetylglucosamine-induced protein which plays a role in the N-acetylglucosamine metabolic pathway. This Candida albicans (strain SC5314 / ATCC MYA-2876) (Yeast) protein is N-acetylglucosamine-induced protein 1.